A 204-amino-acid polypeptide reads, in one-letter code: Urease accessory protein UreG (204 aa).

15–22 (GPVGSGKT) contacts GTP.

Belongs to the SIMIBI class G3E GTPase family. UreG subfamily. In terms of assembly, homodimer. UreD, UreF and UreG form a complex that acts as a GTP-hydrolysis-dependent molecular chaperone, activating the urease apoprotein by helping to assemble the nickel containing metallocenter of UreC. The UreE protein probably delivers the nickel.

It localises to the cytoplasm. Functionally, facilitates the functional incorporation of the urease nickel metallocenter. This process requires GTP hydrolysis, probably effectuated by UreG. In Methylobacterium sp. (strain 4-46), this protein is Urease accessory protein UreG.